The sequence spans 325 residues: Putative gluconeogenesis factor (325 aa).

It belongs to the gluconeogenesis factor family.

The protein localises to the cytoplasm. Its function is as follows. Required for morphogenesis under gluconeogenic growth conditions. In Streptococcus pneumoniae serotype 4 (strain ATCC BAA-334 / TIGR4), this protein is Putative gluconeogenesis factor.